Reading from the N-terminus, the 492-residue chain is 2-succinylbenzoate--CoA ligase (492 aa).

It belongs to the ATP-dependent AMP-binding enzyme family. MenE subfamily.

The catalysed reaction is 2-succinylbenzoate + ATP + CoA = 2-succinylbenzoyl-CoA + AMP + diphosphate. Its pathway is quinol/quinone metabolism; 1,4-dihydroxy-2-naphthoate biosynthesis; 1,4-dihydroxy-2-naphthoate from chorismate: step 5/7. It functions in the pathway quinol/quinone metabolism; menaquinone biosynthesis. In terms of biological role, converts 2-succinylbenzoate (OSB) to 2-succinylbenzoyl-CoA (OSB-CoA). The sequence is that of 2-succinylbenzoate--CoA ligase from Staphylococcus aureus (strain Mu3 / ATCC 700698).